Here is a 494-residue protein sequence, read N- to C-terminus: Cysteine--tRNA ligase (494 aa).

Position 29 (C29) interacts with Zn(2+). A 'HIGH' region motif is present at residues V31–H41. 3 residues coordinate Zn(2+): C209, H234, and E238. The 'KMSKS' region signature appears at K266–S270. K269 contributes to the ATP binding site.

The protein belongs to the class-I aminoacyl-tRNA synthetase family. Monomer. Zn(2+) is required as a cofactor.

The protein resides in the cytoplasm. It carries out the reaction tRNA(Cys) + L-cysteine + ATP = L-cysteinyl-tRNA(Cys) + AMP + diphosphate. This Geotalea daltonii (strain DSM 22248 / JCM 15807 / FRC-32) (Geobacter daltonii) protein is Cysteine--tRNA ligase.